The primary structure comprises 345 residues: N-acetyl-gamma-glutamyl-phosphate reductase (345 aa).

Cysteine 149 is an active-site residue.

This sequence belongs to the NAGSA dehydrogenase family. Type 1 subfamily.

The protein localises to the cytoplasm. The enzyme catalyses N-acetyl-L-glutamate 5-semialdehyde + phosphate + NADP(+) = N-acetyl-L-glutamyl 5-phosphate + NADPH + H(+). The protein operates within amino-acid biosynthesis; L-arginine biosynthesis; N(2)-acetyl-L-ornithine from L-glutamate: step 3/4. Functionally, catalyzes the NADPH-dependent reduction of N-acetyl-5-glutamyl phosphate to yield N-acetyl-L-glutamate 5-semialdehyde. This Marinobacter nauticus (strain ATCC 700491 / DSM 11845 / VT8) (Marinobacter aquaeolei) protein is N-acetyl-gamma-glutamyl-phosphate reductase.